Reading from the N-terminus, the 273-residue chain is 2,3,4,5-tetrahydropyridine-2,6-dicarboxylate N-succinyltransferase (273 aa).

Positions 104 and 141 each coordinate substrate.

The protein belongs to the transferase hexapeptide repeat family. Homotrimer.

It is found in the cytoplasm. It catalyses the reaction (S)-2,3,4,5-tetrahydrodipicolinate + succinyl-CoA + H2O = (S)-2-succinylamino-6-oxoheptanedioate + CoA. The protein operates within amino-acid biosynthesis; L-lysine biosynthesis via DAP pathway; LL-2,6-diaminopimelate from (S)-tetrahydrodipicolinate (succinylase route): step 1/3. This is 2,3,4,5-tetrahydropyridine-2,6-dicarboxylate N-succinyltransferase from Nitrosococcus oceani (strain ATCC 19707 / BCRC 17464 / JCM 30415 / NCIMB 11848 / C-107).